Consider the following 90-residue polypeptide: Probable Fe(2+)-trafficking protein (90 aa).

Belongs to the Fe(2+)-trafficking protein family.

Its function is as follows. Could be a mediator in iron transactions between iron acquisition and iron-requiring processes, such as synthesis and/or repair of Fe-S clusters in biosynthetic enzymes. The protein is Probable Fe(2+)-trafficking protein of Leptothrix cholodnii (strain ATCC 51168 / LMG 8142 / SP-6) (Leptothrix discophora (strain SP-6)).